Here is a 285-residue protein sequence, read N- to C-terminus: GTP cyclohydrolase 1 type 2 homolog (285 aa).

5 residues coordinate a divalent metal cation: H65, H66, D104, H230, and E234.

This sequence belongs to the GTP cyclohydrolase I type 2/NIF3 family. In terms of assembly, homohexamer.

The sequence is that of GTP cyclohydrolase 1 type 2 homolog from Streptomyces coelicolor (strain ATCC BAA-471 / A3(2) / M145).